A 721-amino-acid chain; its full sequence is Translation initiation factor eIF2B subunit epsilon (721 aa).

Residues 1-13 are compositionally biased toward low complexity; it reads MAAPVVAPPGVVV. Positions 1 to 40 are disordered; the sequence is MAAPVVAPPGVVVSRANKRSGAGPGGSGGGGARGAEEEPP. At alanine 2 the chain carries N-acetylalanine. Omega-N-methylarginine is present on arginine 19. A compositionally biased stretch (gly residues) spans 22 to 33; that stretch reads AGPGGSGGGGAR. Serine 27 carries the phosphoserine modification. Residues lysine 61 and lysine 103 each participate in a glycyl lysine isopeptide (Lys-Gly) (interchain with G-Cter in ubiquitin) cross-link. Residue serine 130 is modified to Phosphoserine. Glycyl lysine isopeptide (Lys-Gly) (interchain with G-Cter in ubiquitin) cross-links involve residues lysine 141 and lysine 217. A Phosphothreonine modification is found at threonine 322. Disordered stretches follow at residues 444–483 and 523–547; these read PEGS…MKGY and EESE…SPQM. Phosphoserine occurs at positions 450, 466, 469, 532, and 540. 2 stretches are compositionally biased toward acidic residues: residues 456 to 471 and 523 to 537; these read AEED…DSGA and EESE…DSEE. The 178-residue stretch at 543 to 720 folds into the W2 domain; it reads GSPQMDDIKV…KEAEEESSED (178 aa). Serine 544 carries the post-translational modification Phosphoserine; by DYRK2. Serine 717 is subject to Phosphoserine.

It belongs to the eIF-2B gamma/epsilon subunits family. In terms of assembly, component of the translation initiation factor 2B (eIF2B) complex which is a heterodecamer of two sets of five different subunits: alpha, beta, gamma, delta and epsilon. Subunits alpha, beta and delta comprise a regulatory subcomplex and subunits epsilon and gamma comprise a catalytic subcomplex. Within the complex, the hexameric regulatory complex resides at the center, with the two heterodimeric catalytic subcomplexes bound on opposite sides. Post-translationally, phosphorylated at Ser-544 by DYRK2; this is required for subsequent phosphorylation by GSK3B. Phosphorylated on serine and threonine residues by GSK3B; phosphorylation inhibits its function. In terms of processing, polyubiquitinated, probably by NEDD4.

Its subcellular location is the cytoplasm. The protein localises to the cytosol. Activated by the chemical integrated stress response (ISR) inhibitor ISRIB which stimulates guanine nucleotide exchange factor activity for both phosphorylated and unphosphorylated eIF2. In terms of biological role, acts as a component of the translation initiation factor 2B (eIF2B) complex, which catalyzes the exchange of GDP for GTP on eukaryotic initiation factor 2 (eIF2) gamma subunit. Its guanine nucleotide exchange factor activity is repressed when bound to eIF2 complex phosphorylated on the alpha subunit, thereby limiting the amount of methionyl-initiator methionine tRNA available to the ribosome and consequently global translation is repressed. The chain is Translation initiation factor eIF2B subunit epsilon (EIF2B5) from Homo sapiens (Human).